Consider the following 351-residue polypeptide: Protein-glutamate methylesterase/protein-glutamine glutaminase 2 (351 aa).

The Response regulatory domain occupies Lys-4–Leu-121. At Asp-55 the chain carries 4-aspartylphosphate. One can recognise a CheB-type methylesterase domain in the interval Arg-156–Leu-348. Active-site residues include Ser-168, His-194, and Asp-290.

It belongs to the CheB family. In terms of processing, phosphorylated by CheA. Phosphorylation of the N-terminal regulatory domain activates the methylesterase activity.

The protein resides in the cytoplasm. It catalyses the reaction [protein]-L-glutamate 5-O-methyl ester + H2O = L-glutamyl-[protein] + methanol + H(+). The catalysed reaction is L-glutaminyl-[protein] + H2O = L-glutamyl-[protein] + NH4(+). Involved in chemotaxis. Part of a chemotaxis signal transduction system that modulates chemotaxis in response to various stimuli. Catalyzes the demethylation of specific methylglutamate residues introduced into the chemoreceptors (methyl-accepting chemotaxis proteins or MCP) by CheR. Also mediates the irreversible deamidation of specific glutamine residues to glutamic acid. In Shewanella sp. (strain MR-7), this protein is Protein-glutamate methylesterase/protein-glutamine glutaminase 2.